Consider the following 768-residue polypeptide: Transferrin receptor protein 1 (768 aa).

The Cytoplasmic portion of the chain corresponds to 1-68 (MMDQARSAFS…VAKPKRLNGY (68 aa)). Residues 1 to 70 (MMDQARSAFS…KPKRLNGYVC (70 aa)) form a mediates interaction with SH3BP4 region. Residues Ser-10 and Ser-19 each carry the phosphoserine modification. At Tyr-20 the chain carries Phosphotyrosine. Residues 20-23 (YTRF) carry the Endocytosis signal motif. Thr-21 is subject to Phosphothreonine. Ser-24 is modified (phosphoserine). Positions 61-64 (KPKR) match the Stop-transfer sequence motif. The helical transmembrane segment at 69 to 89 (VCYGIIAVITFFLIGFMIGYL) threads the bilayer. Residue Cys-70 is the site of S-palmitoyl cysteine attachment. Residues 90 to 768 (AYCKRVESKT…GDIWDIDNEF (679 aa)) lie on the Extracellular side of the membrane. The 91-residue stretch at 231-321 (SKATTVTGKL…GTGDPYTPGF (91 aa)) folds into the PA domain. Residues Asn-259 and Asn-325 are each glycosylated (N-linked (GlcNAc...) asparagine). Positions 577–768 (TMDTYDVLSK…GDIWDIDNEF (192 aa)) are ligand-binding. The Cell attachment site signature appears at 654–656 (RGD). Residues Asn-730 and Asn-735 are each glycosylated (N-linked (GlcNAc...) asparagine).

The protein belongs to the peptidase M28 family. M28B subfamily. Homodimer; disulfide-linked. Binds one transferrin or HFE molecule per subunit. Interacts with SH3BP4. Interacts with SH3BP3. Interacts with STEAP3; facilitates TFRC endocytosis in erythroid precursor cells. Post-translationally, stearoylated by ZDHHC6 which inhibits TFRC-mediated activation of the JNK pathway and promotes mitochondrial fragmentation. Stearoylation does not affect iron uptake.

The protein resides in the cell membrane. It localises to the melanosome. Its function is as follows. Cellular uptake of iron occurs via receptor-mediated endocytosis of ligand-occupied transferrin receptor into specialized endosomes. Endosomal acidification leads to iron release. The apotransferrin-receptor complex is then recycled to the cell surface with a return to neutral pH and the concomitant loss of affinity of apotransferrin for its receptor. Transferrin receptor is necessary for development of erythrocytes and the nervous system. Positively regulates T and B cell proliferation through iron uptake. Acts as a lipid sensor that regulates mitochondrial fusion by regulating activation of the JNK pathway. When dietary levels of stearate (C18:0) are low, promotes activation of the JNK pathway, resulting in HUWE1-mediated ubiquitination and subsequent degradation of the mitofusin MFN2 and inhibition of mitochondrial fusion. When dietary levels of stearate (C18:0) are high, TFRC stearoylation inhibits activation of the JNK pathway and thus degradation of the mitofusin MFN2. Mediates uptake of NICOL1 into fibroblasts where it may regulate extracellular matrix production. This Sus scrofa (Pig) protein is Transferrin receptor protein 1 (TFRC).